The sequence spans 659 residues: MSDVSQRIEALREQIEEANYQYYGLDQPTLSDAEYDALLQELIRLEKEHPEFLTPDSPSQRVGGYIAKEFPKVRHAEALLSLDNAFDAGDLLEFDRRVRSMVAEVEYVVELKIDGLTVALTYEDGALVRGATRGDGEVGEEITANLKTIPAIPLRLRKQADRLDVRGEGYMPKGSFLRLNQEREEAGQPLFANPRNAAAGSLRQLDSRITAQRKLGYFAYQVLTPEEGELASQTAVLDYLKEQGFSVNPEYRVFSAIEEVIAYCGEMVEKRHNYPYDIDGLVIKVNDIAQQRELGFTAKSPRWAIAYKFPAEQVETVVEDIVIRVGRTGVLTPTAYLTPVFVAGSTVGRATLHNLDNIRAKDVRIGDHVLIQKAGDVIPEVVKILPEKRTGGERIFEMPELCPECQSPVIREEGEAAHRCTSITCPARQREAIIHFVSRNAMNIDGLGPAVIYQLLEAGLIKDAADLYALEYDALVPLERLGKKSAENLLKAIEDSKERGLAPLIFGLGIRHVGEKAGKILAQKYGTMEDLEKAQVEELQEIPDVGPAMAQSVAQFFQQESTHHFLNKLRQAGVVMSAQHSAKPQIFAGKSIVVTGSLQRWDRHYVETMIEEFGGKAASSVSKKTAFVVAGEKAGSKLAKAKELGIPVLSEEEFAELLP.

Residues 32 to 36 (DAEYD), 81 to 82 (SL), and Glu110 contribute to the NAD(+) site. Lys112 serves as the catalytic N6-AMP-lysine intermediate. Arg133, Glu168, Lys284, and Lys308 together coordinate NAD(+). 4 residues coordinate Zn(2+): Cys402, Cys405, Cys420, and Cys425. The BRCT domain maps to 582-659 (AKPQIFAGKS…SEEEFAELLP (78 aa)).

Belongs to the NAD-dependent DNA ligase family. LigA subfamily. Requires Mg(2+) as cofactor. Mn(2+) serves as cofactor.

The catalysed reaction is NAD(+) + (deoxyribonucleotide)n-3'-hydroxyl + 5'-phospho-(deoxyribonucleotide)m = (deoxyribonucleotide)n+m + AMP + beta-nicotinamide D-nucleotide.. In terms of biological role, DNA ligase that catalyzes the formation of phosphodiester linkages between 5'-phosphoryl and 3'-hydroxyl groups in double-stranded DNA using NAD as a coenzyme and as the energy source for the reaction. It is essential for DNA replication and repair of damaged DNA. The chain is DNA ligase from Desulfitobacterium hafniense (strain DSM 10664 / DCB-2).